The primary structure comprises 139 residues: Peptide methionine sulfoxide reductase B5 (139 aa).

N-acetylalanine is present on Ala2. The 122-residue stretch at 12 to 133 (EEEWRAVLSP…NSVSISFNPA (122 aa)) folds into the MsrB domain. The Zn(2+) site is built by Cys51, Cys54, Cys97, and Cys100. A disulfide bridge links Cys69 with Cys122. Cys122 (nucleophile) is an active-site residue.

Belongs to the MsrB Met sulfoxide reductase family. Zn(2+) is required as a cofactor.

The protein localises to the cytoplasm. It localises to the cytosol. It catalyses the reaction L-methionyl-[protein] + [thioredoxin]-disulfide + H2O = L-methionyl-(R)-S-oxide-[protein] + [thioredoxin]-dithiol. Functionally, catalyzes the reduction of methionine sulfoxide (MetSO) to methionine in proteins. Plays a protective role against oxidative stress by restoring activity to proteins that have been inactivated by methionine oxidation. MSRB family specifically reduces the MetSO R-enantiomer. In Arabidopsis thaliana (Mouse-ear cress), this protein is Peptide methionine sulfoxide reductase B5 (MSRB5).